The following is a 301-amino-acid chain: Acetaldehyde dehydrogenase (301 aa).

The active-site Acyl-thioester intermediate is the C130. NAD(+) is bound by residues 161-169 and N272; that span reads SVGPGTRRN.

It belongs to the acetaldehyde dehydrogenase family.

It catalyses the reaction acetaldehyde + NAD(+) + CoA = acetyl-CoA + NADH + H(+). In Cupriavidus taiwanensis (strain DSM 17343 / BCRC 17206 / CCUG 44338 / CIP 107171 / LMG 19424 / R1) (Ralstonia taiwanensis (strain LMG 19424)), this protein is Acetaldehyde dehydrogenase (mhpF).